Reading from the N-terminus, the 806-residue chain is MNSSPPFLLKISAPSTSPQADCPNNYSFPPESPSSCRKGFTPVLTLEVPVAPGKDFNDHLSCNAGLSPNAGNRFTNPPYSREPFSCLTISSPCLPRRIPTPPPPPPVLSSPPPPERCPFEPFSPLLGRLYRQEPAGSSSPCFDRFSLQGSPSPHQRNLCCNYIDSPESQRSCPPSPRLCYVTSPPLIHQAPRASPVTSPELTHITLETGPVISTPLMPGSQGNYSIISPLLTHRPLRPGLAISPPLAHRSVETRPLTPASISHRGPHCPSRRSYNDPPLSSASSPPSGNPYHDNPMPPNSCEPKPQLDVPLGKNGCGPPLSSQAGMSGSPISPQEGCIHYSHLCPDSQISAPRSPFCVINLPPESAGSPSSSLPQALQKPCVGSFLWEPGGNSYLLLTPGTIISGPSCTTGPPLPQCPNPSPYFPSPLNNQCVAPPQSPRGYNEPRPPTSAPPQMKSPKSPESRRNPYKCRSLDNTPHHTPPSHSKSHKTNTCPQPPSQSFGLFSPCMEPAITTTSNSCPKEPPPETAVLKTVAPTSCPHSSPCNPALPSRYPKSSPHVPPPVSPCNTHMYSVVPPTSHLSPLSSPLNQSIPLPQPAVLPCGTYSAPRGPPSHIKSVAPPCSTHIYSFIPLRTPFDPRCLPVVPRARFCPTTVPCGIHTYAVTSPVPLNNPSQIPYSCSLPPSKTSSTCSTSVSSTIVCSDYQSSDSQINHQNKSQSPNKNSSLHNQSKSPLRRGAFQSRSRSRSSSPLQSSTQDRNESTNMGVKHHKRSRKQSQSPADGKIESQSKSLQHRKSVGQIKSPHSKKK.

Disordered regions lie at residues 1–36 (MNSS…PSSC), 257–329 (TPAS…MSGS), 428–496 (LNNQ…CPQP), and 707–806 (SQIN…SKKK). Residues 13-27 (APSTSPQADCPNNYS) are compositionally biased toward polar residues. Residues 277 to 290 (PPLSSASSPPSGNP) show a composition bias toward low complexity. Over residues 320-329 (LSSQAGMSGS) the composition is skewed to polar residues. An interaction with CRISP2 region spans residues 521–806 (KEPPPETAVL…QIKSPHSKKK (286 aa)). 2 stretches are compositionally biased toward low complexity: residues 710–723 (NHQN…KNSS) and 733–754 (RRGA…SSTQ). Positions 773 to 788 (QSQSPADGKIESQSKS) are enriched in polar residues.

As to quaternary structure, interacts with CRISP2. Isoforms 3 and 4 are expressed in testis (at protein level).

It localises to the cytoplasm. Its function is as follows. Plays a role during spermatogenesis. The protein is Sperm head and tail associated protein (Nsun4) of Mus musculus (Mouse).